Here is a 497-residue protein sequence, read N- to C-terminus: Pancreatic alpha-amylase (497 aa).

Residue Gln1 is modified to Pyrrolidone carboxylic acid. Disulfide bonds link Cys28/Cys86, Cys70/Cys115, and Cys141/Cys160. Residues Asn100, Arg158, and Asp167 each coordinate Ca(2+). Arg195 serves as a coordination point for chloride. Asp197 serves as the catalytic Nucleophile. Ca(2+) is bound at residue His201. The active-site Proton donor is Glu233. Positions 298 and 337 each coordinate chloride. 2 disulfide bridges follow: Cys379–Cys385 and Cys451–Cys463.

The protein belongs to the glycosyl hydrolase 13 family. As to quaternary structure, monomer. Ca(2+) serves as cofactor. It depends on chloride as a cofactor.

The protein localises to the secreted. It is found in the extracellular space. The catalysed reaction is Endohydrolysis of (1-&gt;4)-alpha-D-glucosidic linkages in polysaccharides containing three or more (1-&gt;4)-alpha-linked D-glucose units.. This Struthio camelus (Common ostrich) protein is Pancreatic alpha-amylase.